A 398-amino-acid chain; its full sequence is Lipoyl synthase, mitochondrial (398 aa).

The transit peptide at 1–32 directs the protein to the mitochondrion; the sequence is MIALRVHNTRVVSRSLTVWTRPSPTLTLSRSL. The [4Fe-4S] cluster site is built by Cys-117, Cys-122, Cys-128, Cys-147, Cys-151, Cys-154, and Ser-362. The Radical SAM core domain occupies 132-351; sequence KKSEATATIM…RDTALEMGFL (220 aa).

The protein belongs to the radical SAM superfamily. Lipoyl synthase family. [4Fe-4S] cluster is required as a cofactor.

The protein localises to the mitochondrion. It carries out the reaction [[Fe-S] cluster scaffold protein carrying a second [4Fe-4S](2+) cluster] + N(6)-octanoyl-L-lysyl-[protein] + 2 oxidized [2Fe-2S]-[ferredoxin] + 2 S-adenosyl-L-methionine + 4 H(+) = [[Fe-S] cluster scaffold protein] + N(6)-[(R)-dihydrolipoyl]-L-lysyl-[protein] + 4 Fe(3+) + 2 hydrogen sulfide + 2 5'-deoxyadenosine + 2 L-methionine + 2 reduced [2Fe-2S]-[ferredoxin]. Its pathway is protein modification; protein lipoylation via endogenous pathway; protein N(6)-(lipoyl)lysine from octanoyl-[acyl-carrier-protein]: step 2/2. Catalyzes the radical-mediated insertion of two sulfur atoms into the C-6 and C-8 positions of the octanoyl moiety bound to the lipoyl domains of lipoate-dependent enzymes, thereby converting the octanoylated domains into lipoylated derivatives. The sequence is that of Lipoyl synthase, mitochondrial from Scheffersomyces stipitis (strain ATCC 58785 / CBS 6054 / NBRC 10063 / NRRL Y-11545) (Yeast).